A 336-amino-acid polypeptide reads, in one-letter code: Fructose-1,6-bisphosphatase class 1 (336 aa).

Positions 90, 112, 114, and 115 each coordinate Mg(2+). Substrate is bound by residues Asp-115 to Ser-118, Asn-211, and Lys-277. Glu-283 is a Mg(2+) binding site.

This sequence belongs to the FBPase class 1 family. As to quaternary structure, homotetramer. It depends on Mg(2+) as a cofactor.

Its subcellular location is the cytoplasm. It catalyses the reaction beta-D-fructose 1,6-bisphosphate + H2O = beta-D-fructose 6-phosphate + phosphate. It participates in carbohydrate biosynthesis; gluconeogenesis. This is Fructose-1,6-bisphosphatase class 1 from Pseudomonas aeruginosa (strain UCBPP-PA14).